A 70-amino-acid polypeptide reads, in one-letter code: MPHVKVKENEPFDVALRRFKRSIEKVGLLTELRAREFYEKPTAERKRKLAAAVKRQSKRLRSQQLPPKMY.

Residues 48–61 (KLAAAVKRQSKRLR) show a composition bias toward basic residues. The tract at residues 48–70 (KLAAAVKRQSKRLRSQQLPPKMY) is disordered.

Belongs to the bacterial ribosomal protein bS21 family.

The protein is Small ribosomal subunit protein bS21 of Thiobacillus denitrificans (strain ATCC 25259 / T1).